A 432-amino-acid polypeptide reads, in one-letter code: Tol-Pal system protein TolB (432 aa).

An N-terminal signal peptide occupies residues 1–21; that stretch reads MSTLIRIALFALALMAGAAQA.

The protein belongs to the TolB family. As to quaternary structure, the Tol-Pal system is composed of five core proteins: the inner membrane proteins TolA, TolQ and TolR, the periplasmic protein TolB and the outer membrane protein Pal. They form a network linking the inner and outer membranes and the peptidoglycan layer.

It is found in the periplasm. In terms of biological role, part of the Tol-Pal system, which plays a role in outer membrane invagination during cell division and is important for maintaining outer membrane integrity. This is Tol-Pal system protein TolB from Pseudomonas aeruginosa (strain ATCC 15692 / DSM 22644 / CIP 104116 / JCM 14847 / LMG 12228 / 1C / PRS 101 / PAO1).